Here is a 212-residue protein sequence, read N- to C-terminus: Orotate phosphoribosyltransferase (212 aa).

A 5-phospho-alpha-D-ribose 1-diphosphate-binding site is contributed by Lys26. 34-35 contacts orotate; the sequence is FF. Residues 72–73, Arg99, Lys100, Lys103, His105, and 124–132 contribute to the 5-phospho-alpha-D-ribose 1-diphosphate site; these read YK and DDVITVGTA. Positions 128 and 156 each coordinate orotate.

This sequence belongs to the purine/pyrimidine phosphoribosyltransferase family. PyrE subfamily. As to quaternary structure, homodimer. It depends on Mg(2+) as a cofactor.

It catalyses the reaction orotidine 5'-phosphate + diphosphate = orotate + 5-phospho-alpha-D-ribose 1-diphosphate. The protein operates within pyrimidine metabolism; UMP biosynthesis via de novo pathway; UMP from orotate: step 1/2. Catalyzes the transfer of a ribosyl phosphate group from 5-phosphoribose 1-diphosphate to orotate, leading to the formation of orotidine monophosphate (OMP). This Ruthia magnifica subsp. Calyptogena magnifica protein is Orotate phosphoribosyltransferase.